The sequence spans 422 residues: Inositol phosphorylceramide synthase catalytic subunit aur1 (422 aa).

At 1–47 (MSALSTLKKRLAACNRASQYKLETSLNPMPTFRLLRNTKWSWTHLQY) the chain is on the cytoplasmic side. Transmembrane regions (helical) follow at residues 48 to 68 (VFLA…GFWG) and 69 to 85 (KFGI…VPLT). Topologically, residues 86 to 87 (RQ) are cytoplasmic. A helical membrane pass occupies residues 88-108 (IFFPAIVIITWAILFYSCRFI). Topologically, residues 109–159 (PERWRPPIWVRVLPTLENILYGSNLSSLLSKTTHSILDILAWVPYGVMHYS) are lumenal. An N-linked (GlcNAc...) asparagine glycan is attached at Asn132. A helical transmembrane segment spans residues 160 to 180 (APFIISFILFIFAPPGTLPVW). The Cytoplasmic portion of the chain corresponds to 181–183 (ART). A helical membrane pass occupies residues 184-204 (FGYMNLFGVLIQMAFPCSPPW). The Lumenal segment spans residues 205-245 (YENMYGLEPATYAVRGSPGGLARIDALFGTSIYTDGFSNSP). The helical transmembrane segment at 246–266 (VVFGAFPSLHAGWAMLEALFL) threads the bilayer. Over 267–274 (SHVFPRYR) the chain is Cytoplasmic. Helical transmembrane passes span 275 to 292 (FCFY…MYLT) and 293 to 313 (HHYF…FVFA). At 314–422 (QKLRLPQLQT…SSIFDASHLP (109 aa)) the chain is on the cytoplasmic side. Ser353 bears the Phosphoserine mark. Residues 386–406 (EWSVGSSSPEPLPSPAADLID) are disordered.

This sequence belongs to the AUR1 family. As to quaternary structure, component of the inositol phosphorylceramide synthase complex composed of at least aur1 and kei1.

It localises to the golgi apparatus. The protein resides in the golgi stack membrane. With respect to regulation, inhibited by aureobasidin A (AbA). Its function is as follows. Catalytic component of the inositol phosphorylceramide synthase which catalyzes the addition of a phosphorylinositol group onto ceramide to form inositol phosphorylceramide, an essential step in sphingolipid biosynthesis. The protein is Inositol phosphorylceramide synthase catalytic subunit aur1 (aur1) of Schizosaccharomyces pombe (strain 972 / ATCC 24843) (Fission yeast).